Reading from the N-terminus, the 165-residue chain is Peptidyl-prolyl cis-trans isomerase A (165 aa).

At Met-1 the chain carries N-acetylmethionine. Val-2 carries the post-translational modification N-acetylvaline; in Peptidyl-prolyl cis-trans isomerase A, N-terminally processed. The PPIase cyclophilin-type domain maps to 7 to 163 (FFDIAVDGEP…KKITIADCGQ (157 aa)). Lys-28 is modified (N6-acetyllysine; alternate). Residue Lys-28 forms a Glycyl lysine isopeptide (Lys-Gly) (interchain with G-Cter in SUMO2); alternate linkage. Residue Lys-28 forms a Glycyl lysine isopeptide (Lys-Gly) (interchain with G-Cter in ubiquitin); alternate linkage. N6-acetyllysine occurs at positions 44 and 76. A Phosphoserine modification is found at Ser-77. Lys-82 carries the N6-acetyllysine; alternate modification. A Glycyl lysine isopeptide (Lys-Gly) (interchain with G-Cter in SUMO2); alternate cross-link involves residue Lys-82. Thr-93 bears the Phosphothreonine mark. Asn-108 carries an N-linked (GlcNAc...) asparagine glycan. N6-acetyllysine occurs at positions 125, 131, and 133.

This sequence belongs to the cyclophilin-type PPIase family. PPIase A subfamily. In terms of assembly, interacts with protein phosphatase PPP3CA/calcineurin A. Interacts with isoform 2 of BSG/CD147. Interacts with FOXO1; the interaction promotes FOXO1 dephosphorylation, nuclear accumulation and transcriptional activity. Interacts with integrin ITGA2B:ITGB3; the interaction is ROS and peptidyl-prolyl cis-trans isomerase (PPIase) activity-dependent and is increased in the presence of thrombin. Interacts with MAP3K5. Interacts with TARDBP; the interaction is dependent on the RNA-binding activity of TARDBP and the PPIase activity of PPIA/CYPA and the acetylation of PPIA/CYPA at Lys-125 favors the interaction. Interacts with HNRNPA1, HNRNPA2B1, HNRNPC, RBMX, HNRNPK and HNRNPM. Post-translationally, acetylation at Lys-125 markedly inhibits catalysis of cis to trans isomerization. PPIA acetylation also antagonizes the immunosuppressive effects of cyclosporine by inhibiting the sequential steps of cyclosporine binding and calcineurin inhibition. Acetylation at Lys-125 favors the interaction with TARDBP.

It is found in the cytoplasm. It localises to the secreted. The protein localises to the nucleus. It catalyses the reaction [protein]-peptidylproline (omega=180) = [protein]-peptidylproline (omega=0). Binds cyclosporin A (CsA). CsA mediates some of its effects via an inhibitory action on PPIase. In terms of biological role, catalyzes the cis-trans isomerization of proline imidic peptide bonds in oligopeptides. Exerts a strong chemotactic effect on leukocytes partly through activation of one of its membrane receptors BSG/CD147, initiating a signaling cascade that culminates in MAPK/ERK activation. Activates endothelial cells (ECs) in a proinflammatory manner by stimulating activation of NF-kappa-B and ERK, JNK and p38 MAP-kinases and by inducing expression of adhesion molecules including SELE and VCAM1. Induces apoptosis in ECs by promoting the FOXO1-dependent expression of CCL2 and BCL2L11 which are involved in EC chemotaxis and apoptosis. In response to oxidative stress, initiates proapoptotic and antiapoptotic signaling in ECs via activation of NF-kappa-B and AKT1 and up-regulation of antiapoptotic protein BCL2. Negatively regulates MAP3K5/ASK1 kinase activity, autophosphorylation and oxidative stress-induced apoptosis mediated by MAP3K5/ASK1. Necessary for the assembly of TARDBP in heterogeneous nuclear ribonucleoprotein (hnRNP) complexes and regulates TARDBP binding to RNA UG repeats and TARDBP-dependent expression of HDAC6, ATG7 and VCP which are involved in clearance of protein aggregates. Plays an important role in platelet activation and aggregation. Regulates calcium mobilization and integrin ITGA2B:ITGB3 bidirectional signaling via increased ROS production as well as by facilitating the interaction between integrin and the cell cytoskeleton. Binds heparan sulfate glycosaminoglycans. The polypeptide is Peptidyl-prolyl cis-trans isomerase A (PPIA) (Symphalangus syndactylus (Siamang)).